Here is an 89-residue protein sequence, read N- to C-terminus: MAISKEKKNEIIKQYARHDGDTGSVEVQVAVLTWEINHLNEHIKQHKKDHATYRGLMKKIGHRRNLLAYLRRTDVNRYRDLISSLGLRR.

This sequence belongs to the universal ribosomal protein uS15 family. As to quaternary structure, part of the 30S ribosomal subunit. Forms a bridge to the 50S subunit in the 70S ribosome, contacting the 23S rRNA.

In terms of biological role, one of the primary rRNA binding proteins, it binds directly to 16S rRNA where it helps nucleate assembly of the platform of the 30S subunit by binding and bridging several RNA helices of the 16S rRNA. Functionally, forms an intersubunit bridge (bridge B4) with the 23S rRNA of the 50S subunit in the ribosome. This Streptococcus mutans serotype c (strain ATCC 700610 / UA159) protein is Small ribosomal subunit protein uS15.